We begin with the raw amino-acid sequence, 330 residues long: D-alanine--D-alanine ligase (330 aa).

Residues 122 to 323 (NRFLSGFGIR…MKEVLCTIIR (202 aa)) form the ATP-grasp domain. Position 151 to 206 (151 to 206 (IARMGLPLFVKPNVGGSSIATTKVVEAAQLLPAIEQAFSEGEEVMIERLICGTEVT)) interacts with ATP. The Mg(2+) site is built by aspartate 277, glutamate 290, and asparagine 292.

Belongs to the D-alanine--D-alanine ligase family. It depends on Mg(2+) as a cofactor. Requires Mn(2+) as cofactor.

It localises to the cytoplasm. It catalyses the reaction 2 D-alanine + ATP = D-alanyl-D-alanine + ADP + phosphate + H(+). It participates in cell wall biogenesis; peptidoglycan biosynthesis. Cell wall formation. The protein is D-alanine--D-alanine ligase of Porphyromonas gingivalis (strain ATCC BAA-308 / W83).